The sequence spans 24 residues: 29 kDa outer membrane protein (24 aa).

Its subcellular location is the cell outer membrane. May be involved in transporting molecules across the outer membrane. In Acinetobacter baumannii, this protein is 29 kDa outer membrane protein.